A 442-amino-acid chain; its full sequence is ATP-dependent protease ATPase subunit HslU (442 aa).

ATP is bound by residues Ile-18, 60–65 (GVGKTE), Asp-255, Glu-320, and Arg-392.

This sequence belongs to the ClpX chaperone family. HslU subfamily. A double ring-shaped homohexamer of HslV is capped on each side by a ring-shaped HslU homohexamer. The assembly of the HslU/HslV complex is dependent on binding of ATP.

It localises to the cytoplasm. ATPase subunit of a proteasome-like degradation complex; this subunit has chaperone activity. The binding of ATP and its subsequent hydrolysis by HslU are essential for unfolding of protein substrates subsequently hydrolyzed by HslV. HslU recognizes the N-terminal part of its protein substrates and unfolds these before they are guided to HslV for hydrolysis. This Shewanella putrefaciens (strain CN-32 / ATCC BAA-453) protein is ATP-dependent protease ATPase subunit HslU.